The following is a 696-amino-acid chain: Polyribonucleotide nucleotidyltransferase (696 aa).

Mg(2+) contacts are provided by aspartate 486 and aspartate 492. The 60-residue stretch at 553–612 folds into the KH domain; the sequence is PRITQKQIPKDRIGELIGPGGKMIRAIIEQSGSEISVDDSGKVTIASPSEESKEKAIAMI. In terms of domain architecture, S1 motif spans 622–690; the sequence is GKIYDGVIKR…KMGKIDLSRK (69 aa).

It belongs to the polyribonucleotide nucleotidyltransferase family. Mg(2+) is required as a cofactor.

The protein resides in the cytoplasm. It catalyses the reaction RNA(n+1) + phosphate = RNA(n) + a ribonucleoside 5'-diphosphate. In terms of biological role, involved in mRNA degradation. Catalyzes the phosphorolysis of single-stranded polyribonucleotides processively in the 3'- to 5'-direction. The polypeptide is Polyribonucleotide nucleotidyltransferase (Leptospira biflexa serovar Patoc (strain Patoc 1 / ATCC 23582 / Paris)).